The chain runs to 228 residues: UPF0758 protein Gura_4138 (228 aa).

Positions 106–228 (RFTSPSQVFE…FLSFVDRGMM (123 aa)) constitute an MPN domain. Zn(2+)-binding residues include His-177, His-179, and Asp-190. The JAMM motif motif lies at 177–190 (HNHPTGDPTPSRED).

It belongs to the UPF0758 family.

This is UPF0758 protein Gura_4138 from Geotalea uraniireducens (strain Rf4) (Geobacter uraniireducens).